Here is a 57-residue protein sequence, read N- to C-terminus: Small ribosomal subunit protein bS21 (57 aa).

Positions E31 to F57 are disordered. The segment covering R33 to F57 has biased composition (basic residues).

This sequence belongs to the bacterial ribosomal protein bS21 family.

The sequence is that of Small ribosomal subunit protein bS21 (rpsU) from Halalkalibacterium halodurans (strain ATCC BAA-125 / DSM 18197 / FERM 7344 / JCM 9153 / C-125) (Bacillus halodurans).